We begin with the raw amino-acid sequence, 548 residues long: Glucose-6-phosphate isomerase (548 aa).

Catalysis depends on E359, which acts as the Proton donor. Catalysis depends on residues H390 and K510.

The protein belongs to the GPI family.

It localises to the cytoplasm. The catalysed reaction is alpha-D-glucose 6-phosphate = beta-D-fructose 6-phosphate. It participates in carbohydrate biosynthesis; gluconeogenesis. The protein operates within carbohydrate degradation; glycolysis; D-glyceraldehyde 3-phosphate and glycerone phosphate from D-glucose: step 2/4. Its function is as follows. Catalyzes the reversible isomerization of glucose-6-phosphate to fructose-6-phosphate. The protein is Glucose-6-phosphate isomerase of Gloeobacter violaceus (strain ATCC 29082 / PCC 7421).